The primary structure comprises 214 residues: A-type ATP synthase subunit D (214 aa).

It belongs to the V-ATPase D subunit family. In terms of assembly, has multiple subunits with at least A(3), B(3), C, D, E, F, H, I and proteolipid K(x).

Its subcellular location is the cell membrane. Component of the A-type ATP synthase that produces ATP from ADP in the presence of a proton gradient across the membrane. This is A-type ATP synthase subunit D from Desulfurococcus sp. (strain SY).